The primary structure comprises 186 residues: CASP-like protein ARALYDRAFT_316979 (186 aa).

At 1-23 (MRRNGDGEEVVAKRRRRIKELVQ) the chain is on the cytoplasmic side. Residues 24–44 (VALRGGCLAASATAMAVMLTA) traverse the membrane as a helical segment. Residues 45–70 (TEEGVADIYGFKLTLSSNWSFSPSYQ) are Extracellular-facing. The N-linked (GlcNAc...) asparagine glycan is linked to Asn-62. The helical transmembrane segment at 71-91 (YVVGACTGTVLYSLFQLCLGV) threads the bilayer. Residues 92 to 115 (YRLLTGSPITPSRFQAWLCFTSDQ) are Cytoplasmic-facing. A helical membrane pass occupies residues 116–132 (LFGYLMMSAGSAGSGVT). The Extracellular segment spans residues 133-161 (NLNKTGIRHTPLPDFCKTLSSFCNHVALS). Asn-135 carries N-linked (GlcNAc...) asparagine glycosylation. The helical transmembrane segment at 162 to 182 (LLLVFLSFIFLASSSFFTVLV) threads the bilayer. Residues 183 to 186 (LSTP) are Cytoplasmic-facing.

The protein belongs to the Casparian strip membrane proteins (CASP) family. Homodimer and heterodimers.

The protein localises to the cell membrane. The protein is CASP-like protein ARALYDRAFT_316979 of Arabidopsis lyrata subsp. lyrata (Lyre-leaved rock-cress).